The chain runs to 168 residues: Disulfide bond formation protein B 1 (168 aa).

Residues 1-14 (MNELTSRLNRERRF) are Cytoplasmic-facing. Residues 15 to 31 (LVLLGVICLALIGGALY) traverse the membrane as a helical segment. Residues 32–49 (MQVVLGEAPCPLCILQRY) are Periplasmic-facing. A disulfide bond links cysteine 41 and cysteine 44. Residues 50–65 (ALLFIAIFAFIAAAMP) form a helical membrane-spanning segment. Residues 66–72 (GRKSLTF) are Cytoplasmic-facing. A helical transmembrane segment spans residues 73–89 (FEVLVVLSAIGGIVAAG). Over 90–144 (NHVYILANPMVSCGIDTLQPIVDDLPLAKLWPLAFQVDGFCSTPYPPILGLSLAQ) the chain is Periplasmic. Cysteine 102 and cysteine 130 are joined by a disulfide. Residues 145–163 (WALVAFVLTTVLVPLGIYR) form a helical membrane-spanning segment. At 164 to 168 (NRRRG) the chain is on the cytoplasmic side.

It belongs to the DsbB family.

It is found in the cell inner membrane. Required for disulfide bond formation in some periplasmic proteins. Acts by oxidizing the DsbA protein. The chain is Disulfide bond formation protein B 1 from Pseudomonas entomophila (strain L48).